Consider the following 2270-residue polypeptide: Protein DOP1B (2270 aa).

3 disordered regions span residues 548 to 572 (METP…VEGE), 697 to 716 (LKQR…TEEE), and 1084 to 1145 (QEQD…DMPR). Residues 1095-1145 (ADTSTGHNDSDNTSSFTPSSVDLSSDQNYRDNTAGQVTHKNTGQQNMDMPR) are compositionally biased toward polar residues.

The protein belongs to the DOP1 family.

The protein localises to the golgi apparatus membrane. May be involved in protein traffic between late Golgi and early endosomes. The protein is Protein DOP1B (dop1b) of Xenopus laevis (African clawed frog).